Consider the following 224-residue polypeptide: Germin-like protein 8-10 (224 aa).

Positions 1-22 are cleaved as a signal peptide; the sequence is MASPSICLLAALLALVSWQAIA. An intrachain disulfide couples Cys-32 to Cys-47. The Cupin type-1 domain maps to 62-212; the sequence is AMLDTPRKTN…AFQVEKGTID (151 aa). The N-linked (GlcNAc...) asparagine glycan is linked to Asn-76. Mn(2+) is bound by residues His-109, His-111, and Glu-116. Asn-135 is a glycosylation site (N-linked (GlcNAc...) asparagine). His-157 is a Mn(2+) binding site.

It belongs to the germin family. Oligomer (believed to be a pentamer but probably hexamer).

Its subcellular location is the secreted. It is found in the extracellular space. The protein localises to the apoplast. In terms of biological role, plays a role in broad-spectrum disease resistance. Probably has no oxalate oxidase activity even if the active site is conserved. This chain is Germin-like protein 8-10 (GLP2), found in Oryza sativa subsp. japonica (Rice).